The following is a 140-amino-acid chain: Nucleoside diphosphate kinase (140 aa).

ATP is bound by residues Lys11, Phe59, Arg87, Thr93, Arg104, and Asn114. Catalysis depends on His117, which acts as the Pros-phosphohistidine intermediate.

Belongs to the NDK family. In terms of assembly, homotetramer. Mg(2+) is required as a cofactor.

It is found in the cytoplasm. The enzyme catalyses a 2'-deoxyribonucleoside 5'-diphosphate + ATP = a 2'-deoxyribonucleoside 5'-triphosphate + ADP. It catalyses the reaction a ribonucleoside 5'-diphosphate + ATP = a ribonucleoside 5'-triphosphate + ADP. Its function is as follows. Major role in the synthesis of nucleoside triphosphates other than ATP. The ATP gamma phosphate is transferred to the NDP beta phosphate via a ping-pong mechanism, using a phosphorylated active-site intermediate. The polypeptide is Nucleoside diphosphate kinase (Bartonella henselae (strain ATCC 49882 / DSM 28221 / CCUG 30454 / Houston 1) (Rochalimaea henselae)).